The sequence spans 92 residues: RNA-binding protein Hfq (92 aa).

The 61-residue stretch at 11–71 folds into the Sm domain; it reads DRFLNHLRVN…ISTIIPSSYV (61 aa).

The protein belongs to the Hfq family. As to quaternary structure, homohexamer.

RNA chaperone that binds small regulatory RNA (sRNAs) and mRNAs to facilitate mRNA translational regulation in response to envelope stress, environmental stress and changes in metabolite concentrations. Also binds with high specificity to tRNAs. This is RNA-binding protein Hfq from Thermotoga maritima (strain ATCC 43589 / DSM 3109 / JCM 10099 / NBRC 100826 / MSB8).